The following is a 397-amino-acid chain: DnaJ homolog subfamily A member 4 (397 aa).

The 67-residue stretch at 4–70 folds into the J domain; the sequence is ETQYYDILGV…RDIYDQGGEQ (67 aa). Residue Ser-18 is modified to Phosphoserine. The CR-type zinc finger occupies 122–206; sequence GITKKLALQK…CSGAKVTREK (85 aa). Zn(2+)-binding residues include Cys-135, Cys-138, Cys-151, Cys-154, Cys-178, Cys-181, Cys-194, and Cys-197. CXXCXGXG motif repeat units lie at residues 135-142, 151-158, 178-185, and 194-201; these read CEKCEGIG, CPLCKGRG, CIECKGQG, and CENCSGAK. Residues 366–380 are compositionally biased toward basic and acidic residues; it reads EFNPNEQSWRQHREA. Residues 366-397 are disordered; that stretch reads EFNPNEQSWRQHREAYEEDDEEPRAGVQCQTA. At Cys-394 the chain carries Cysteine methyl ester. Residue Cys-394 is the site of S-farnesyl cysteine attachment. Residues 395 to 397 constitute a propeptide, removed in mature form; sequence QTA.

Specifically expressed in testis and heart.

The protein localises to the membrane. This is DnaJ homolog subfamily A member 4 (Dnaja4) from Mus musculus (Mouse).